Here is a 305-residue protein sequence, read N- to C-terminus: Glycine--tRNA ligase alpha subunit (305 aa).

The protein belongs to the class-II aminoacyl-tRNA synthetase family. In terms of assembly, tetramer of two alpha and two beta subunits.

Its subcellular location is the cytoplasm. It catalyses the reaction tRNA(Gly) + glycine + ATP = glycyl-tRNA(Gly) + AMP + diphosphate. This chain is Glycine--tRNA ligase alpha subunit, found in Streptococcus uberis (strain ATCC BAA-854 / 0140J).